A 159-amino-acid polypeptide reads, in one-letter code: RNA pyrophosphohydrolase (159 aa).

The 144-residue stretch at 6–149 (GFRPNVGIIL…KREVYRRALK (144 aa)) folds into the Nudix hydrolase domain. The Nudix box signature appears at 38-59 (GGINPDETPEDALYRELNEEVG).

This sequence belongs to the Nudix hydrolase family. RppH subfamily. It depends on a divalent metal cation as a cofactor.

Functionally, accelerates the degradation of transcripts by removing pyrophosphate from the 5'-end of triphosphorylated RNA, leading to a more labile monophosphorylated state that can stimulate subsequent ribonuclease cleavage. The protein is RNA pyrophosphohydrolase of Pseudomonas fluorescens (strain ATCC BAA-477 / NRRL B-23932 / Pf-5).